A 501-amino-acid polypeptide reads, in one-letter code: Lysine--tRNA ligase (501 aa).

The Mg(2+) site is built by E402 and E409.

Belongs to the class-II aminoacyl-tRNA synthetase family. In terms of assembly, homodimer. It depends on Mg(2+) as a cofactor.

The protein localises to the cytoplasm. The enzyme catalyses tRNA(Lys) + L-lysine + ATP = L-lysyl-tRNA(Lys) + AMP + diphosphate. In Helicobacter pylori (strain J99 / ATCC 700824) (Campylobacter pylori J99), this protein is Lysine--tRNA ligase (lysS).